Consider the following 115-residue polypeptide: Large ribosomal subunit protein bL20 (115 aa).

Belongs to the bacterial ribosomal protein bL20 family.

Binds directly to 23S ribosomal RNA and is necessary for the in vitro assembly process of the 50S ribosomal subunit. It is not involved in the protein synthesizing functions of that subunit. The chain is Large ribosomal subunit protein bL20 from Borrelia hermsii (strain HS1 / DAH).